A 350-amino-acid chain; its full sequence is ATPase GET3 (350 aa).

ATP is bound at residue 26 to 33 (KGGVGKTT). D57 is an active-site residue. Residues E243 and N270 each contribute to the ATP site. Residues C282 and C285 each contribute to the Zn(2+) site.

The protein belongs to the arsA ATPase family. As to quaternary structure, homodimer. Component of the Golgi to ER traffic (GET) complex, which is composed of GET1, GET2 and GET3. Within the complex, GET1 and GET2 form a heterotetramer which is stabilized by phosphatidylinositol binding and which binds to the GET3 homodimer. Interacts with the chloride channel protein GEF1.

The protein localises to the cytoplasm. It localises to the endoplasmic reticulum. Its subcellular location is the golgi apparatus. Its function is as follows. ATPase required for the post-translational delivery of tail-anchored (TA) proteins to the endoplasmic reticulum. Recognizes and selectively binds the transmembrane domain of TA proteins in the cytosol. This complex then targets to the endoplasmic reticulum by membrane-bound receptors GET1 and GET2, where the tail-anchored protein is released for insertion. This process is regulated by ATP binding and hydrolysis. ATP binding drives the homodimer towards the closed dimer state, facilitating recognition of newly synthesized TA membrane proteins. ATP hydrolysis is required for insertion. Subsequently, the homodimer reverts towards the open dimer state, lowering its affinity for the GET1-GET2 receptor, and returning it to the cytosol to initiate a new round of targeting. Cooperates with the HDEL receptor ERD2 to mediate the ATP-dependent retrieval of resident ER proteins that contain a C-terminal H-D-E-L retention signal from the Golgi to the ER. Involved in low-level resistance to the oxyanions arsenite and arsenate, and in heat tolerance. The polypeptide is ATPase GET3 (Candida dubliniensis (strain CD36 / ATCC MYA-646 / CBS 7987 / NCPF 3949 / NRRL Y-17841) (Yeast)).